A 364-amino-acid chain; its full sequence is Chorismate synthase (364 aa).

Positions 41–60 are disordered; that stretch reads MQHDLDRRRPGTSRYTTARR. NADP(+) contacts are provided by R48 and R54. Residues 125–127, 238–239, G278, 293–297, and R319 each bind FMN; these read RSS, NA, and KPTSS.

It belongs to the chorismate synthase family. In terms of assembly, homotetramer. FMNH2 is required as a cofactor.

It catalyses the reaction 5-O-(1-carboxyvinyl)-3-phosphoshikimate = chorismate + phosphate. It functions in the pathway metabolic intermediate biosynthesis; chorismate biosynthesis; chorismate from D-erythrose 4-phosphate and phosphoenolpyruvate: step 7/7. Catalyzes the anti-1,4-elimination of the C-3 phosphate and the C-6 proR hydrogen from 5-enolpyruvylshikimate-3-phosphate (EPSP) to yield chorismate, which is the branch point compound that serves as the starting substrate for the three terminal pathways of aromatic amino acid biosynthesis. This reaction introduces a second double bond into the aromatic ring system. This is Chorismate synthase from Shewanella baltica (strain OS223).